We begin with the raw amino-acid sequence, 265 residues long: MTRYILGALIGSGTYGEVYEAIDTETKEKVALKRIRLNEKEGMPGTALREISILKKLSHRNIISLVSIIHTDALLTMVFPFIDYELKKYIGMNTGKNIMELVNQLICGVHYLHRMNVVHRDLKPQNILVTSDGVLKIADFGLSRSLEIRVPPYSSEVVTLWYRSPELLMGSTSYRFYVDIWSLGCIIYEMITLEPLFPGESKENQLTLIRRKAGTRRSLRGMVEQRLAVPKFVTEIIVRCLDFNYNQRITADEIMEILENEYGAC.

A Protein kinase domain is found at Tyr-4 to Gly-263. Residues Ile-10–Val-18 and Lys-33 each bind ATP. Catalysis depends on Asp-121, which acts as the Proton acceptor.

This sequence belongs to the protein kinase superfamily. CMGC Ser/Thr protein kinase family. CDC2/CDKX subfamily.

The protein resides in the nucleus. The enzyme catalyses L-seryl-[protein] + ATP = O-phospho-L-seryl-[protein] + ADP + H(+). The catalysed reaction is L-threonyl-[protein] + ATP = O-phospho-L-threonyl-[protein] + ADP + H(+). In terms of biological role, may play a role in the control of the eukaryotic cell cycle. This is Probable cell division protein kinase ECU08_0230 from Encephalitozoon cuniculi (strain GB-M1) (Microsporidian parasite).